A 190-amino-acid chain; its full sequence is NADH-quinone oxidoreductase subunit B (190 aa).

Residues cysteine 69, cysteine 70, cysteine 134, and cysteine 164 each contribute to the [4Fe-4S] cluster site.

The protein belongs to the complex I 20 kDa subunit family. In terms of assembly, NDH-1 is composed of 14 different subunits. Subunits NuoB, C, D, E, F, and G constitute the peripheral sector of the complex. The cofactor is [4Fe-4S] cluster.

It localises to the cell inner membrane. It carries out the reaction a quinone + NADH + 5 H(+)(in) = a quinol + NAD(+) + 4 H(+)(out). In terms of biological role, NDH-1 shuttles electrons from NADH, via FMN and iron-sulfur (Fe-S) centers, to quinones in the respiratory chain. Couples the redox reaction to proton translocation (for every two electrons transferred, four hydrogen ions are translocated across the cytoplasmic membrane), and thus conserves the redox energy in a proton gradient. This chain is NADH-quinone oxidoreductase subunit B, found in Chelativorans sp. (strain BNC1).